The following is a 98-amino-acid chain: NADH-ubiquinone oxidoreductase chain 4L (98 aa).

Transmembrane regions (helical) follow at residues 1 to 21 (MTMVYANIFLAFITSLMGLLM), 29 to 49 (SLLCLEGMMLSLFVMMTVTIL), and 61 to 81 (IILLVFAACEAALGLSLLVMV).

Belongs to the complex I subunit 4L family. As to quaternary structure, core subunit of respiratory chain NADH dehydrogenase (Complex I) which is composed of 45 different subunits.

The protein resides in the mitochondrion inner membrane. The catalysed reaction is a ubiquinone + NADH + 5 H(+)(in) = a ubiquinol + NAD(+) + 4 H(+)(out). In terms of biological role, core subunit of the mitochondrial membrane respiratory chain NADH dehydrogenase (Complex I) which catalyzes electron transfer from NADH through the respiratory chain, using ubiquinone as an electron acceptor. Part of the enzyme membrane arm which is embedded in the lipid bilayer and involved in proton translocation. The sequence is that of NADH-ubiquinone oxidoreductase chain 4L (MT-ND4L) from Leptonychotes weddellii (Weddell seal).